An 804-amino-acid chain; its full sequence is ABC transporter aclQ (804 aa).

A run of 9 helical transmembrane segments spans residues 3-23, 52-72, 97-117, 119-139, 155-175, 206-226, 239-259, 349-369, and 373-393; these read LAVL…ISYL, FTAI…SITI, IAVF…PFSP, LSHS…LAMF, LQLG…ALYF, HGGW…LWPS, FVLL…LGIV, LVFQ…YFLI, and AFYS…TIYM. An ABC transmembrane type-1 domain is found at 236-518; the sequence is IFCFVLLVIQ…FGSFYTQVQN (283 aa). N-linked (GlcNAc...) asparagine glycosylation is present at Asn460. A run of 2 helical transmembrane segments spans residues 464 to 484 and 489 to 509; these read NLLF…QISA and VAMF…LNFF. One can recognise an ABC transporter domain in the interval 552-786; sequence VEFTHVNFAY…NGMYSQMWAK (235 aa). Residue 585-592 participates in ATP binding; that stretch reads GESGSGKS. N-linked (GlcNAc...) asparagine glycosylation is found at Asn639 and Asn797.

This sequence belongs to the ABC transporter superfamily. ABCB family. Heavy Metal importer (TC 3.A.1.210) subfamily.

The protein resides in the membrane. Its function is as follows. ABC transporter; part of the gene cluster that mediates the biosynthesis of aspirochlorine (or antibiotic A30641), an unusual halogenated spiro compound with distinctive antifungal properties due to selective inhibition of protein biosynthesis, and which is also active against bacteria, viruses, and murine tumor cells. This Aspergillus oryzae (strain ATCC 42149 / RIB 40) (Yellow koji mold) protein is ABC transporter aclQ.